Consider the following 213-residue polypeptide: MAVFKAITTEQVEILTAGLYAGVDEVGRGPLVGNVVTAAVILDPTKPITGLNDSKKLSEKKREALFTEIHEKALAISIGYASPEEIDELNILHATMLAMQRAVAGLDMAPTSVLVDGNRTPDFSHGEDTDRNIESHAIIKGDGLVAGISAASIVAKVIRDREMDLLDMEHPQYGFAKHKGYPTKAHFEALALHGVLPEHRKSFRPVKERLAKN.

The 196-residue stretch at 18 to 213 folds into the RNase H type-2 domain; it reads GLYAGVDEVG…RPVKERLAKN (196 aa). Positions 24, 25, and 116 each coordinate a divalent metal cation.

This sequence belongs to the RNase HII family. The cofactor is Mn(2+). It depends on Mg(2+) as a cofactor.

The protein resides in the cytoplasm. The enzyme catalyses Endonucleolytic cleavage to 5'-phosphomonoester.. Functionally, endonuclease that specifically degrades the RNA of RNA-DNA hybrids. The protein is Ribonuclease HII of Shewanella sediminis (strain HAW-EB3).